The following is a 202-amino-acid chain: Adenosylcobalamin/alpha-ribazole phosphatase (202 aa).

His8 (tele-phosphohistidine intermediate) is an active-site residue. Glu81 acts as the Proton donor/acceptor in catalysis.

The protein belongs to the phosphoglycerate mutase family. As to quaternary structure, monomer.

It carries out the reaction adenosylcob(III)alamin 5'-phosphate + H2O = adenosylcob(III)alamin + phosphate. The catalysed reaction is alpha-ribazole 5'-phosphate + H2O = alpha-ribazole + phosphate. It functions in the pathway nucleoside biosynthesis; alpha-ribazole biosynthesis; alpha-ribazole from 5,6-dimethylbenzimidazole: step 2/2. Catalyzes the conversion of adenosylcobalamin 5'-phosphate to adenosylcobalamin (vitamin B12); involved in the assembly of the nucleotide loop of cobalamin. Also catalyzes the hydrolysis of the phospho group from alpha-ribazole 5'-phosphate to form alpha-ribazole. This chain is Adenosylcobalamin/alpha-ribazole phosphatase (cobC), found in Salmonella typhimurium (strain LT2 / SGSC1412 / ATCC 700720).